A 327-amino-acid polypeptide reads, in one-letter code: MVKQLTDAFARKFYYLRLSITDVCNFRCTYCLPDGYKPRGHHSFLTLPEIRLVGRAFADLGTEKIRLTGGEPTMRRDFTDIISVIRENKLIKTLAVTTNGYRMERDIAKWKEAGLTAVNVSMDSLDPRQFHAITGQDKFFQVMRGIDAAFAVGFSKVKVNVVLMKNVNDISLSAFLHWIKDRPIQLRFIELMETGDGGEMFRQYHISGEIIRERLLLDGWHLLQRSRSDGPAQVFSHPDYQGEVGLIMPYEKNFCQSCNRLRVSSIGHLHLCLFGEQGIPLRDLLASEKQLDDLKLRIQDGLRHKRETHFLHQGDSGITPNLSVIGG.

The region spanning 8-232 (AFARKFYYLR…LQRSRSDGPA (225 aa)) is the Radical SAM core domain. Residue Arg-17 participates in GTP binding. Cys-24 and Cys-28 together coordinate [4Fe-4S] cluster. Tyr-30 lines the S-adenosyl-L-methionine pocket. Position 31 (Cys-31) interacts with [4Fe-4S] cluster. Arg-66 provides a ligand contact to GTP. Gly-70 serves as a coordination point for S-adenosyl-L-methionine. Thr-97 lines the GTP pocket. Ser-121 serves as a coordination point for S-adenosyl-L-methionine. Lys-158 is a GTP binding site. Residue Met-192 participates in S-adenosyl-L-methionine binding. The [4Fe-4S] cluster site is built by Cys-255 and Cys-258. Position 260–262 (260–262 (RLR)) interacts with GTP. Cys-272 is a binding site for [4Fe-4S] cluster.

The protein belongs to the radical SAM superfamily. MoaA family. In terms of assembly, monomer and homodimer. It depends on [4Fe-4S] cluster as a cofactor.

The enzyme catalyses GTP + AH2 + S-adenosyl-L-methionine = (8S)-3',8-cyclo-7,8-dihydroguanosine 5'-triphosphate + 5'-deoxyadenosine + L-methionine + A + H(+). It participates in cofactor biosynthesis; molybdopterin biosynthesis. Catalyzes the cyclization of GTP to (8S)-3',8-cyclo-7,8-dihydroguanosine 5'-triphosphate. The protein is GTP 3',8-cyclase of Photorhabdus laumondii subsp. laumondii (strain DSM 15139 / CIP 105565 / TT01) (Photorhabdus luminescens subsp. laumondii).